A 2187-amino-acid polypeptide reads, in one-letter code: Nascent polypeptide-associated complex subunit alpha, muscle-specific form (2187 aa).

3 disordered regions span residues 1-20 (MPGEATETVPATEQELPQPQ), 32-73 (LKVA…STPF), and 172-196 (IPPLEPKTSTSQVPSQGTLNLKGTA). The span at 9–20 (VPATEQELPQPQ) shows a compositional bias: polar residues. Residues 178–192 (KTSTSQVPSQGTLNL) show a composition bias toward polar residues. Position 247 is an asymmetric dimethylarginine (arginine 247). Disordered regions lie at residues 335-370 (DSGAAPSDDKGSSAVTNELCSPPGSSNVAGTSLSPK), 579-611 (NTVSQPLKRSVTDPAMAPRTAKNTAPSTTSPLV), 738-835 (PKGS…PKDT), 884-1847 (KETL…PVEK), and 1892-2053 (PEAV…KAMS). Residues 347-369 (SAVTNELCSPPGSSNVAGTSLSP) show a composition bias toward polar residues. Phosphothreonine is present on threonine 590. Composition is skewed to polar residues over residues 599–609 (AKNTAPSTTSP), 818–835 (VTPTSPKKTSATAVPKDT), and 887–905 (LATSIPKVTSPSPQKTPKS). Serine 822 bears the Phosphoserine mark. The span at 941–951 (PHVPPTSPPKS) shows a compositional bias: pro residues. Over residues 976-998 (TPTYPKKSPKPAASKKTPATPSP) the composition is skewed to low complexity. Residues 1106 to 1122 (TPQNATPNESLAASSQK) show a composition bias toward polar residues. Phosphoserine occurs at positions 1174 and 1177. The segment covering 1174-1195 (SPLSPKKASKTAAPKEAPATPS) has biased composition (low complexity). Threonine 1364 carries the post-translational modification Phosphothreonine. Serine 1368 and serine 1392 each carry phosphoserine. Threonine 1398 is subject to Phosphothreonine. Phosphoserine is present on residues serine 1400 and serine 1423. Residues 1429–1440 (VTPSSKKLSQTV) show a composition bias toward polar residues. Residues 1489 to 1504 (SPSSPKKAPKTAAPPS) show a composition bias toward low complexity. Residue serine 1492 is modified to Phosphoserine. Over residues 1609 to 1631 (PVTTSLAQTAPPSLQKAPSTTIP) the composition is skewed to polar residues. Low complexity-rich tracts occupy residues 1636–1670 (AAPAVLPVSSKSPAAPAAASASLSPATAAPQTAPK) and 1714–1727 (SSPPKKASSSKRAS). The span at 1762 to 1772 (ACSTGTTTPQA) shows a compositional bias: polar residues. Composition is skewed to low complexity over residues 1806–1823 (KSPGANSNSASSPKCPDP) and 1892–1914 (PEAVSASVAPKPAPAASLTLAPS). A PXLXP motif is present at residues 1950–1954 (PPLIP). Positions 1973–1983 (APKPAGTPAPA) are enriched in pro residues. A compositionally biased stretch (acidic residues) spans 2001 to 2014 (SDSDESVPELEEQD). Serine 2015 is modified (phosphoserine; by ILK1). Residues 2016–2029 (TQTATQQAQLAAAA) are compositionally biased toward low complexity. Residues 2041-2052 (QSRSEKKARKAM) are required for DNA-binding. In terms of domain architecture, NAC-A/B spans 2042 to 2107 (SRSEKKARKA…AKIEDLSQQA (66 aa)). A Phosphoserine modification is found at serine 2104. Lysine 2114 carries the post-translational modification N6-acetyllysine; alternate. Lysine 2114 is covalently cross-linked (Glycyl lysine isopeptide (Lys-Gly) (interchain with G-Cter in SUMO2); alternate). Phosphothreonine; by GSK3-beta is present on threonine 2131. At threonine 2133 the chain carries Phosphothreonine. Phosphoserine occurs at positions 2138, 2158, 2163, and 2175. The region spanning 2148–2185 (VEVKDIELVMSQANVSRAKAVRALKNNSNDIVNAIMEL) is the UBA domain.

Belongs to the NAC-alpha family. In terms of assembly, interacts (via PXLXP motif) with the muscle-restricted histone methyltransferase SMYD1 (via MYND-type zinc finger). Phosphorylation of Ser-2015 by ILK during cell adhesion may promote nuclear localization. Phosphorylation of Thr-2131 by GSK3B may promote proteasome mediated degradation. Specifically expressed in heart and skeletal muscle: it is present in differentiated myotubes but not in myoblasts.

It is found in the cytoplasm. Its subcellular location is the nucleus. Functionally, cardiac- and muscle-specific transcription factor. May act to regulate the expression of genes involved in the development of myotubes. Plays a critical role in ventricular cardiomyocyte expansion and regulates postnatal skeletal muscle growth and regeneration. Involved in the organized assembly of thick and thin filaments of myofibril sarcomeres. This is Nascent polypeptide-associated complex subunit alpha, muscle-specific form (Naca) from Mus musculus (Mouse).